We begin with the raw amino-acid sequence, 58 residues long: Small ribosomal subunit protein bS21 (58 aa).

The protein belongs to the bacterial ribosomal protein bS21 family.

This Lacticaseibacillus paracasei (strain ATCC 334 / BCRC 17002 / CCUG 31169 / CIP 107868 / KCTC 3260 / NRRL B-441) (Lactobacillus paracasei) protein is Small ribosomal subunit protein bS21.